The sequence spans 718 residues: Methionine--tRNA ligase (718 aa).

The short motif at 27–37 is the 'HIGH' region element; it reads PYANGQIHIGH. 4 residues coordinate Zn(2+): cysteine 158, cysteine 161, cysteine 171, and cysteine 174. Positions 348–352 match the 'KMSKS' region motif; that stretch reads KMSKS. Residue lysine 351 participates in ATP binding. Residues 612–718 enclose the tRNA-binding domain; the sequence is DFAKIDLRIA…SGAKPGMRVK (107 aa).

It belongs to the class-I aminoacyl-tRNA synthetase family. MetG type 1 subfamily. In terms of assembly, homodimer. Requires Zn(2+) as cofactor.

The protein localises to the cytoplasm. It carries out the reaction tRNA(Met) + L-methionine + ATP = L-methionyl-tRNA(Met) + AMP + diphosphate. In terms of biological role, is required not only for elongation of protein synthesis but also for the initiation of all mRNA translation through initiator tRNA(fMet) aminoacylation. The protein is Methionine--tRNA ligase of Burkholderia thailandensis (strain ATCC 700388 / DSM 13276 / CCUG 48851 / CIP 106301 / E264).